A 163-amino-acid chain; its full sequence is SsrA-binding protein (163 aa).

A compositionally biased stretch (basic and acidic residues) spans 138 to 157 (EDRRGAIAERESKREMDRAL). Residues 138–163 (EDRRGAIAERESKREMDRALARGRRR) form a disordered region.

This sequence belongs to the SmpB family.

Its subcellular location is the cytoplasm. In terms of biological role, required for rescue of stalled ribosomes mediated by trans-translation. Binds to transfer-messenger RNA (tmRNA), required for stable association of tmRNA with ribosomes. tmRNA and SmpB together mimic tRNA shape, replacing the anticodon stem-loop with SmpB. tmRNA is encoded by the ssrA gene; the 2 termini fold to resemble tRNA(Ala) and it encodes a 'tag peptide', a short internal open reading frame. During trans-translation Ala-aminoacylated tmRNA acts like a tRNA, entering the A-site of stalled ribosomes, displacing the stalled mRNA. The ribosome then switches to translate the ORF on the tmRNA; the nascent peptide is terminated with the 'tag peptide' encoded by the tmRNA and targeted for degradation. The ribosome is freed to recommence translation, which seems to be the essential function of trans-translation. This chain is SsrA-binding protein, found in Anaeromyxobacter dehalogenans (strain 2CP-1 / ATCC BAA-258).